Here is a 1323-residue protein sequence, read N- to C-terminus: Inositol hexakisphosphate and diphosphoinositol-pentakisphosphate kinase (1323 aa).

Residue 26–27 (RK) coordinates substrate. Residues Arg109, Lys162, His169, Arg188, 212–215 (EEFI), and 221–223 (DVK) contribute to the ATP site. 188–189 (RK) is a binding site for substrate. Substrate-binding residues include Lys223 and Arg237. Residues Asp284 and 296-298 (DVN) each bind ATP. A substrate-binding site is contributed by 301–304 (SFVK). Residues 355-426 (TTPSGKLAEL…VLELARALVI (72 aa)) form a polyphosphoinositide-binding domain region. Composition is skewed to polar residues over residues 933-947 (FNLS…SSRS) and 977-992 (VTPT…NDDL). Disordered regions lie at residues 933 to 1022 (FNLS…SEDD), 1043 to 1107 (AMAD…GGGK), and 1134 to 1155 (IVIP…ASER). A compositionally biased stretch (low complexity) spans 993 to 1006 (SISSNAESTAAEST). The span at 1062–1074 (KSMEEGDKPHGEW) shows a compositional bias: basic and acidic residues. The span at 1090 to 1101 (SNEMESNNESME) shows a compositional bias: low complexity.

This sequence belongs to the histidine acid phosphatase family. VIP1 subfamily.

Its subcellular location is the cytoplasm. The protein localises to the cytosol. It carries out the reaction 1D-myo-inositol hexakisphosphate + ATP = 1-diphospho-1D-myo-inositol 2,3,4,5,6-pentakisphosphate + ADP. The catalysed reaction is 5-diphospho-1D-myo-inositol 1,2,3,4,6-pentakisphosphate + ATP + H(+) = 1,5-bis(diphospho)-1D-myo-inositol 2,3,4,6-tetrakisphosphate + ADP. Functionally, bifunctional inositol kinase that acts in concert with the IP6K kinases to synthesize the diphosphate group-containing inositol pyrophosphates diphosphoinositol pentakisphosphate, PP-InsP5, and bis-diphosphoinositol tetrakisphosphate, (PP)2-InsP4. PP-InsP5 and (PP)2-InsP4, also respectively called InsP7 and InsP8, may regulate a variety of cellular processes, including apoptosis, vesicle trafficking, cytoskeletal dynamics, and exocytosis. Phosphorylates inositol hexakisphosphate (InsP6) at position 1 to produce PP-InsP5 which is in turn phosphorylated by IP6Ks to produce (PP)2-InsP4. Alternatively, phosphorylates PP-InsP5 at position 1, produced by IP6Ks from InsP6, to produce (PP)2-InsP4. The chain is Inositol hexakisphosphate and diphosphoinositol-pentakisphosphate kinase from Caenorhabditis elegans.